The primary structure comprises 139 residues: Arsenate reductase (139 aa).

Catalysis depends on nucleophile residues Cys10, Cys82, and Cys89. Intrachain disulfides connect Cys10–Cys82 and Cys82–Cys89.

This sequence belongs to the low molecular weight phosphotyrosine protein phosphatase family. Thioredoxin-coupled ArsC subfamily.

It is found in the cytoplasm. The catalysed reaction is arsenate + [thioredoxin]-dithiol + H(+) = arsenite + [thioredoxin]-disulfide + H2O. In terms of biological role, catalyzes the reduction of arsenate [As(V)] to arsenite [As(III)]. In Oceanobacillus iheyensis (strain DSM 14371 / CIP 107618 / JCM 11309 / KCTC 3954 / HTE831), this protein is Arsenate reductase.